The following is a 189-amino-acid chain: Movement protein (189 aa).

This sequence belongs to the tombusvirus/aureusvirus movement protein p22 family. Interacts with host protein HFI22. Post-translationally, phosphorylated.

It is found in the host membrane. Transports viral genome to neighboring plant cells directly through plasmosdesmata, without any budding. The movement protein allows efficient cell to cell propagation, by bypassing the host cell wall barrier. Displays RNA-binding activity. This Capsicum annuum (Capsicum pepper) protein is Movement protein.